A 601-amino-acid polypeptide reads, in one-letter code: DNA mismatch repair protein MutL (601 aa).

The protein belongs to the DNA mismatch repair MutL/HexB family.

Its function is as follows. This protein is involved in the repair of mismatches in DNA. It is required for dam-dependent methyl-directed DNA mismatch repair. May act as a 'molecular matchmaker', a protein that promotes the formation of a stable complex between two or more DNA-binding proteins in an ATP-dependent manner without itself being part of a final effector complex. The polypeptide is DNA mismatch repair protein MutL (Listeria monocytogenes serovar 1/2a (strain ATCC BAA-679 / EGD-e)).